The chain runs to 478 residues: Sorting nexin-4 (478 aa).

The segment covering 1–10 (MAVIDQHQDD) has biased composition (basic and acidic residues). A disordered region spans residues 1–56 (MAVIDQHQDDFSNVSWNTDEHTAAESSSSVTATEFDDTERNGHNAYESDAPGSDGQ). Residues 24 to 33 (AESSSSVTAT) are compositionally biased toward low complexity. Positions 58-180 (VLDCVVSEPL…IFLESPDWNA (123 aa)) constitute a PX domain. The a 1,2-diacyl-sn-glycero-3-phospho-(1D-myo-inositol-3-phosphate) site is built by Arg101, Thr103, Lys127, and Arg146. The segment at 459–478 (EGVSGTRSTGVEPPGRRLAD) is disordered.

The protein belongs to the sorting nexin family. As to quaternary structure, interacts with the mitochondrial prohibitin complex subunits PHB1 and PHB2; the interaction is direct and plays a role in mitophagy.

It is found in the cytoplasm. The protein localises to the cytosol. Its subcellular location is the preautophagosomal structure membrane. The protein resides in the endosome membrane. It localises to the mitochondrion membrane. It is found in the lipid droplet. In terms of biological role, sorting nexin, involved in the separation or division of vacuoles throughout the entire life cycle of the cells. Involved in retrieval of late-Golgi SNAREs from post-Golgi endosomes to the trans-Golgi network, for cytoplasm to vacuole transport (Cvt), and autophagy of large cargos including mitophagy, pexophagy and glycophagy. Required for the switch to necrotrophic growth. The polypeptide is Sorting nexin-4 (Colletotrichum higginsianum (strain IMI 349063) (Crucifer anthracnose fungus)).